A 170-amino-acid chain; its full sequence is Large ribosomal subunit protein bL17 (170 aa).

Belongs to the bacterial ribosomal protein bL17 family. Part of the 50S ribosomal subunit. Contacts protein L32.

The protein is Large ribosomal subunit protein bL17 of Azobacteroides pseudotrichonymphae genomovar. CFP2.